Consider the following 76-residue polypeptide: MSEEKEMTFEEAMKQLESIVEKLEEGNVPLEDAIAFFQEGMKLSKLCHDKLQHVEKQLEYMLREDGELVPFSPEEA.

The protein belongs to the XseB family. As to quaternary structure, heterooligomer composed of large and small subunits.

It is found in the cytoplasm. It carries out the reaction Exonucleolytic cleavage in either 5'- to 3'- or 3'- to 5'-direction to yield nucleoside 5'-phosphates.. In terms of biological role, bidirectionally degrades single-stranded DNA into large acid-insoluble oligonucleotides, which are then degraded further into small acid-soluble oligonucleotides. The protein is Exodeoxyribonuclease 7 small subunit of Geobacillus thermodenitrificans (strain NG80-2).